Reading from the N-terminus, the 191-residue chain is NF-kappa-B inhibitor-interacting Ras-like protein 2 (191 aa).

The segment at 1–191 (MGKSCKVVVC…KNKGSGSLDG (191 aa)) is small GTPase-like. A GTP-binding site is contributed by 11 to 18 (GQASVGKT). The short motif at 35-43 (MIETQEDIY) is the Effector region element. Residues 61 to 65 (DTRGL) and 120 to 123 (NKCD) contribute to the GTP site. Residues 169 to 191 (TQPQSKSAFPLSRKNKGSGSLDG) form a disordered region.

This sequence belongs to the small GTPase superfamily. Ras family. KappaB-Ras subfamily. As to quaternary structure, interacts with both NF-kappa-B inhibitor alpha (NFKBIA) and beta (NFKBIB) in vitro. However, it probably only interacts with NFKBIB in vivo. Interacts with GFOD1. As to expression, widely expressed.

Its subcellular location is the cytoplasm. Functionally, atypical Ras-like protein that acts as a potent regulator of NF-kappa-B activity by preventing the degradation of NF-kappa-B inhibitor beta (NFKBIB) by most signals, explaining why NFKBIB is more resistant to degradation. May act by blocking phosphorylation of NFKBIB and nuclear localization of p65/RELA NF-kappa-B subunit. It is unclear whether it acts as a GTPase. Both GTP- and GDP-bound forms block phosphorylation of NFKBIB. The chain is NF-kappa-B inhibitor-interacting Ras-like protein 2 (NKIRAS2) from Homo sapiens (Human).